The primary structure comprises 398 residues: MEYSYRTKINVLFIVLILFVFAALGTAINAPRRKLTKKYRGPCMAVNSIDKCWRCDPFWAEDRQKMADCALGFGINAMGGKYGPYYIVTDNSDDDVVDPKPGTLRFGVIQKGPLWITFARSMRIRLTRELIVSSNKTIDGRGKYVHIANGAGIKIQSASNVIISNLRIHNIVPTAGGLLRESDDHLGLRGADEGDAISIFNSHDIWIDHISMSRATDGLIDAVAGSTNITISNCHFTDHEKVMLFGANDHAEEDRGMKITLAYNHFGKRLDQRMPRCRFGFFHLVNNDYTHWERYAIGGSSGATIISQGNRFIAEDKLLVKEVTYREKSTSSVEEWMKWTWITDGDDFENGATFTPSGDQNLLSKIDHLNLIQPEPSSKVGLLTKFSGALSCKIRRPC.

The N-terminal stretch at 1–27 (MEYSYRTKINVLFIVLILFVFAALGTA) is a signal peptide. An N-linked (GlcNAc...) asparagine glycan is attached at N135. D192, D217, and D221 together coordinate Ca(2+). The N-linked (GlcNAc...) asparagine glycan is linked to N228. R273 is a catalytic residue.

This sequence belongs to the polysaccharide lyase 1 family. Ca(2+) serves as cofactor. As to expression, expressed in anthers and pollen.

It carries out the reaction Eliminative cleavage of (1-&gt;4)-alpha-D-galacturonan to give oligosaccharides with 4-deoxy-alpha-D-galact-4-enuronosyl groups at their non-reducing ends.. Its pathway is glycan metabolism; pectin degradation; 2-dehydro-3-deoxy-D-gluconate from pectin: step 2/5. Its function is as follows. Might be needed during pollen development and tube growth. The polypeptide is Probable pectate lyase P56 (LAT56) (Solanum lycopersicum (Tomato)).